Reading from the N-terminus, the 661-residue chain is MSHSVSLTFPDGSVREFAAGTTGRDVAESISKSLAKKAVAIALDGELRDLSDPIADGKIEIVTREDKRALELIRHDAAHVMAEAVQELWPGTQVTIGPVIDNGFYYDFAKNEPFTPDDLPVIEKKMKEIIARNNPFSKEVWSRDKAKEVFAAKGESYKVELVDAIPEGQDLKIYYQGDWFDLCRGPHMASTGQIGTAFKLMKVAGAYWRGDSNNPMLTRIYGTAWHTQEELDQYLHVLAEAEKRDHRRLGREMDLFHFQEEGPGVVFWHGKGWRVFQSLVAYMRRRLEVDYQEVNAPQVLDKSLWETSGHWGWYRDNMFKVTVAGDETDDDRVFALKPMNCPGHIQIFKHGLKSYRELPVRMAEFGAVHRYEPSGALHGLMRVRGFTQDDAHIFCTDEQMAAECLKINDLILSVYEDFGFKEIVVKLSTRPDKRVGSDALWDRAEAVMTDVLNTIEAQSEGRIKTGILPGEGAFYGPKFEYTLKDAIGREWQCGTTQVDFNLPERFGAFYIDKDSEKRQPVMIHRAICGSMERFLGILLENYAGHMPLWISPLQVVVATITSDADDYGREVAARLREAGLTVETDFRNEKINYKIREHSVTKVPVIVVCGKREAEERSVNIRRLGSQAQTAMSLEEAVAALSSEAMAPDLKRKMERSARAA.

The TGS domain maps to 1 to 64 (MSHSVSLTFP…ADGKIEIVTR (64 aa)). Residues 245–547 (DHRRLGREMD…LLENYAGHMP (303 aa)) form a catalytic region. Zn(2+) contacts are provided by C341, H392, and H524.

This sequence belongs to the class-II aminoacyl-tRNA synthetase family. In terms of assembly, homodimer. Zn(2+) is required as a cofactor.

The protein resides in the cytoplasm. It carries out the reaction tRNA(Thr) + L-threonine + ATP = L-threonyl-tRNA(Thr) + AMP + diphosphate + H(+). Functionally, catalyzes the attachment of threonine to tRNA(Thr) in a two-step reaction: L-threonine is first activated by ATP to form Thr-AMP and then transferred to the acceptor end of tRNA(Thr). Also edits incorrectly charged L-seryl-tRNA(Thr). In Sinorhizobium fredii (strain NBRC 101917 / NGR234), this protein is Threonine--tRNA ligase.